A 72-amino-acid polypeptide reads, in one-letter code: Translation initiation factor IF-1 (72 aa).

The region spanning methionine 1–arginine 72 is the S1-like domain.

Belongs to the IF-1 family. As to quaternary structure, component of the 30S ribosomal translation pre-initiation complex which assembles on the 30S ribosome in the order IF-2 and IF-3, IF-1 and N-formylmethionyl-tRNA(fMet); mRNA recruitment can occur at any time during PIC assembly.

The protein resides in the cytoplasm. In terms of biological role, one of the essential components for the initiation of protein synthesis. Stabilizes the binding of IF-2 and IF-3 on the 30S subunit to which N-formylmethionyl-tRNA(fMet) subsequently binds. Helps modulate mRNA selection, yielding the 30S pre-initiation complex (PIC). Upon addition of the 50S ribosomal subunit IF-1, IF-2 and IF-3 are released leaving the mature 70S translation initiation complex. This is Translation initiation factor IF-1 from Shewanella loihica (strain ATCC BAA-1088 / PV-4).